Consider the following 671-residue polypeptide: DNA ligase (671 aa).

Residues 38–42 (DKEFD), 87–88 (SL), and E113 contribute to the NAD(+) site. K115 functions as the N6-AMP-lysine intermediate in the catalytic mechanism. The NAD(+) site is built by R136, E170, K282, and K306. Positions 396, 399, 414, and 419 each coordinate Zn(2+). The BRCT domain occupies 586-671 (SDLQPFVGQS…LLKQEGIAID (86 aa)).

Belongs to the NAD-dependent DNA ligase family. LigA subfamily. The cofactor is Mg(2+). Mn(2+) serves as cofactor.

The enzyme catalyses NAD(+) + (deoxyribonucleotide)n-3'-hydroxyl + 5'-phospho-(deoxyribonucleotide)m = (deoxyribonucleotide)n+m + AMP + beta-nicotinamide D-nucleotide.. Its function is as follows. DNA ligase that catalyzes the formation of phosphodiester linkages between 5'-phosphoryl and 3'-hydroxyl groups in double-stranded DNA using NAD as a coenzyme and as the energy source for the reaction. It is essential for DNA replication and repair of damaged DNA. This Leptospira biflexa serovar Patoc (strain Patoc 1 / Ames) protein is DNA ligase.